The sequence spans 138 residues: Calmodulin-beta (138 aa).

EF-hand domains follow at residues 1 to 32, 33 to 68, 70 to 105, and 106 to 138; these read EFKE…LGQN, PTEA…KMKE, DSEE…LGEK, and LTDE…MTSK. Residues aspartate 10, aspartate 12, aspartate 14, threonine 16, glutamate 21, aspartate 46, aspartate 48, asparagine 50, threonine 52, glutamate 57, aspartate 83, aspartate 85, asparagine 87, glutamate 94, aspartate 119, aspartate 121, aspartate 123, glutamine 125, and glutamate 130 each contribute to the Ca(2+) site.

The protein belongs to the calmodulin family.

Its function is as follows. Calmodulin mediates the control of a large number of enzymes, ion channels and other proteins by Ca(2+). Among the enzymes to be stimulated by the calmodulin-Ca(2+) complex are a number of protein kinases and phosphatases. In Arbacia punctulata (Punctuate sea urchin), this protein is Calmodulin-beta.